A 243-amino-acid polypeptide reads, in one-letter code: MIDIHSHIVFDVDDGPKSREESKALLAESYRQGVRTIVSTSHRRKGMFETPEEKIAENFLQVREIAKEVADDLVIAYGAEIYYTLDALEKLEKKEIPTLNDSRYALIEFSMHTSYRQIHTGLSNILMLGITPVIAHIERYDALENNEKRVRELIDMGCYTQINSYHVSKPKFFGEKYKFMKKRARYFLERDLVHVVASDMHNLDSRPPYMQQAYDIIAKKYGAKKAKELFVDNPRKIIMDQLI.

The protein belongs to the metallo-dependent hydrolases superfamily. CpsB/CapC family. Requires Mn(2+) as cofactor.

It catalyses the reaction O-phospho-L-tyrosyl-[protein] + H2O = L-tyrosyl-[protein] + phosphate. Its pathway is capsule biogenesis; capsule polysaccharide biosynthesis. Its function is as follows. Dephosphorylates CpsD. Involved in the regulation of capsular polysaccharide biosynthesis. The polypeptide is Tyrosine-protein phosphatase CpsB (cpsB) (Streptococcus pneumoniae).